Reading from the N-terminus, the 607-residue chain is Albumin (607 aa).

The N-terminal stretch at 1-18 (MKWVTFISLLLLFSSAYS) is a signal peptide. A propeptide spanning residues 19-24 (RGVFRR) is cleaved from the precursor. Albumin domains are found at residues 19–209 (RGVF…DAMR), 210–402 (EKVL…KLKH), and 403–600 (LVDE…KLVA). His-27 contributes to the Cu cation binding site. The residue at position 29 (Ser-29) is a Phosphoserine. Positions 30 and 37 each coordinate Ca(2+). An intrachain disulfide couples Cys-77 to Cys-86. 2 positions are modified to phosphoserine: Ser-82 and Ser-89. His-91 contacts Zn(2+). 6 disulfides stabilise this stretch: Cys-99-Cys-115, Cys-114-Cys-125, Cys-147-Cys-192, Cys-191-Cys-200, Cys-223-Cys-269, and Cys-268-Cys-276. Thr-107 carries the phosphothreonine modification. Residue Lys-228 is modified to N6-succinyllysine. Residue Glu-267 participates in Ca(2+) binding. Zn(2+)-binding residues include His-270 and Asp-272. Residues Asp-272, Glu-275, Asp-278, and Asp-282 each contribute to the Ca(2+) site. Disulfide bonds link Cys-288–Cys-302, Cys-301–Cys-312, Cys-339–Cys-384, Cys-383–Cys-392, Cys-415–Cys-461, Cys-460–Cys-471, Cys-484–Cys-500, and Cys-499–Cys-510. Ser-296 bears the Phosphoserine mark. Position 442 is a phosphoserine (Ser-442). 2 positions are modified to phosphothreonine: Thr-443 and Thr-445. At Lys-459 the chain carries N6-succinyllysine. Ser-512 is modified (phosphoserine). 2 cysteine pairs are disulfide-bonded: Cys-537–Cys-582 and Cys-581–Cys-590. Lys-557 carries the N6-methyllysine modification. Phosphothreonine is present on Thr-569. Lys-587 is modified (N6-succinyllysine).

Belongs to the ALB/AFP/VDB family. Interacts with FCGRT; this interaction regulates ALB homeostasis. Interacts with TASOR. In plasma, occurs in a covalently-linked complex with chromophore-bound alpha-1-microglobulin; this interaction does not prevent fatty acid binding to ALB. Post-translationally, phosphorylated by FAM20C in the extracellular medium. Plasma.

The protein localises to the secreted. Binds water, Ca(2+), Na(+), K(+), fatty acids, hormones, bilirubin and drugs. Its main function is the regulation of the colloidal osmotic pressure of blood. Major zinc transporter in plasma, typically binds about 80% of all plasma zinc. Major calcium and magnesium transporter in plasma, binds approximately 45% of circulating calcium and magnesium in plasma. Potentially has more than two calcium-binding sites and might additionally bind calcium in a non-specific manner. The shared binding site between zinc and calcium at residue Asp-272 suggests a crosstalk between zinc and calcium transport in the blood. The rank order of affinity is zinc &gt; calcium &gt; magnesium. Binds to the bacterial siderophore enterobactin and inhibits enterobactin-mediated iron uptake of E.coli from ferric transferrin, and may thereby limit the utilization of iron and growth of enteric bacteria such as E.coli. Does not prevent iron uptake by the bacterial siderophore aerobactin. The sequence is that of Albumin (ALB) from Ovis aries (Sheep).